The sequence spans 363 residues: Dihydroorotate dehydrogenase (quinone) (363 aa).

Residues 62–66 (AGYDK) and Thr86 contribute to the FMN site. Residue Lys66 coordinates substrate. Residue 111 to 115 (NRLGF) participates in substrate binding. The FMN site is built by Asn139 and Asn170. Asn170 contributes to the substrate binding site. Ser173 (nucleophile) is an active-site residue. Asn175 contributes to the substrate binding site. FMN-binding residues include Lys215 and Ser243. Residue 244–245 (NT) participates in substrate binding. Residues Gly266, Gly295, and 316–317 (YS) contribute to the FMN site.

Belongs to the dihydroorotate dehydrogenase family. Type 2 subfamily. In terms of assembly, monomer. The cofactor is FMN.

The protein resides in the cell membrane. The catalysed reaction is (S)-dihydroorotate + a quinone = orotate + a quinol. The protein operates within pyrimidine metabolism; UMP biosynthesis via de novo pathway; orotate from (S)-dihydroorotate (quinone route): step 1/1. Functionally, catalyzes the conversion of dihydroorotate to orotate with quinone as electron acceptor. The protein is Dihydroorotate dehydrogenase (quinone) of Agrobacterium fabrum (strain C58 / ATCC 33970) (Agrobacterium tumefaciens (strain C58)).